A 345-amino-acid polypeptide reads, in one-letter code: Phosphoribosylformylglycinamidine cyclo-ligase (345 aa).

This sequence belongs to the AIR synthase family.

The protein resides in the cytoplasm. The enzyme catalyses 2-formamido-N(1)-(5-O-phospho-beta-D-ribosyl)acetamidine + ATP = 5-amino-1-(5-phospho-beta-D-ribosyl)imidazole + ADP + phosphate + H(+). It functions in the pathway purine metabolism; IMP biosynthesis via de novo pathway; 5-amino-1-(5-phospho-D-ribosyl)imidazole from N(2)-formyl-N(1)-(5-phospho-D-ribosyl)glycinamide: step 2/2. The polypeptide is Phosphoribosylformylglycinamidine cyclo-ligase (Lactobacillus acidophilus (strain ATCC 700396 / NCK56 / N2 / NCFM)).